Here is a 368-residue protein sequence, read N- to C-terminus: Peptide chain release factor 2 (368 aa).

Gln250 bears the N5-methylglutamine mark.

It belongs to the prokaryotic/mitochondrial release factor family. Post-translationally, methylated by PrmC. Methylation increases the termination efficiency of RF2.

The protein resides in the cytoplasm. Functionally, peptide chain release factor 2 directs the termination of translation in response to the peptide chain termination codons UGA and UAA. The chain is Peptide chain release factor 2 from Mycolicibacterium vanbaalenii (strain DSM 7251 / JCM 13017 / BCRC 16820 / KCTC 9966 / NRRL B-24157 / PYR-1) (Mycobacterium vanbaalenii).